The chain runs to 232 residues: Orotidine 5'-phosphate decarboxylase (232 aa).

Substrate contacts are provided by residues Asp16, Lys38, 65 to 74 (DLKLHDIGNT), Thr119, Arg180, Gln189, Gly209, and Arg210. The Proton donor role is filled by Lys67.

It belongs to the OMP decarboxylase family. Type 1 subfamily. In terms of assembly, homodimer.

It catalyses the reaction orotidine 5'-phosphate + H(+) = UMP + CO2. Its pathway is pyrimidine metabolism; UMP biosynthesis via de novo pathway; UMP from orotate: step 2/2. Its function is as follows. Catalyzes the decarboxylation of orotidine 5'-monophosphate (OMP) to uridine 5'-monophosphate (UMP). The sequence is that of Orotidine 5'-phosphate decarboxylase from Methylorubrum extorquens (strain PA1) (Methylobacterium extorquens).